We begin with the raw amino-acid sequence, 772 residues long: Annulin (772 aa).

Residues Cys-4 and Cys-5 are each lipidated (S-palmitoyl cysteine). The disordered stretch occupies residues 15-57; the sequence is NEGSGGGIPLMPVRGGSTRRPDSLPKPPAAVVPSPPSPGDVPD. Residues 38-53 show a composition bias toward pro residues; the sequence is LPKPPAAVVPSPPSPG. Active-site residues include His-400 and Asp-427. Asn-467, Asp-469, Glu-517, and Glu-522 together coordinate Ca(2+).

This sequence belongs to the transglutaminase superfamily. Transglutaminase family. Ca(2+) is required as a cofactor. In terms of tissue distribution, has an annular, or ring-like expression pattern in epithelial annuli of developing limb segment boundary cells. In embryos, it is seen in gastrulating cells, in cells surrounding rapidly dividing neuroblasts, and in muscle pioneer cells invaginating to form apodemes.

Its subcellular location is the cell membrane. The catalysed reaction is L-glutaminyl-[protein] + L-lysyl-[protein] = [protein]-L-lysyl-N(6)-5-L-glutamyl-[protein] + NH4(+). Its function is as follows. Participates in morphogenetic activities of the cells, maybe by stabilizing the membrane or subcortical structures of cells that are under mechanical stress. Probably catalyzes the cross-linking of proteins and the conjugation of polyamines to proteins. The chain is Annulin from Schistocerca americana (American grasshopper).